The following is a 477-amino-acid chain: Proline--tRNA ligase (477 aa).

Residues threonine 111, glutamate 113, and arginine 142 each coordinate L-proline. The ATP site is built by arginine 142, threonine 153, glutamine 225, and threonine 228. An L-proline-binding site is contributed by histidine 230. The ATP site is built by serine 262 and arginine 264. The interaction with tRNA stretch occupies residues 340 to 369; sequence ELKGVPFRVELGPKDLEGGQAVLASRLGGK. 4 residues coordinate Zn(2+): cysteine 427, cysteine 432, cysteine 458, and cysteine 461.

It belongs to the class-II aminoacyl-tRNA synthetase family. ProS type 3 subfamily. In terms of assembly, homodimer. Only one tRNA molecule binds per dimer.

The protein resides in the cytoplasm. The enzyme catalyses tRNA(Pro) + L-proline + ATP = L-prolyl-tRNA(Pro) + AMP + diphosphate. Its function is as follows. Catalyzes the attachment of proline to tRNA(Pro) in a two-step reaction: proline is first activated by ATP to form Pro-AMP and then transferred to the acceptor end of tRNA(Pro). Can inadvertently accommodate and process cysteine. The sequence is that of Proline--tRNA ligase (proS) from Thermus thermophilus (strain ATCC 27634 / DSM 579 / HB8).